The chain runs to 342 residues: A-type ATP synthase subunit C (342 aa).

The protein belongs to the V-ATPase V0D/AC39 subunit family. As to quaternary structure, has multiple subunits with at least A(3), B(3), C, D, E, F, H, I and proteolipid K(x).

It localises to the cell membrane. Functionally, component of the A-type ATP synthase that produces ATP from ADP in the presence of a proton gradient across the membrane. The chain is A-type ATP synthase subunit C from Archaeoglobus fulgidus (strain ATCC 49558 / DSM 4304 / JCM 9628 / NBRC 100126 / VC-16).